The following is a 185-amino-acid chain: Elongation factor P 1 (185 aa).

The protein belongs to the elongation factor P family.

Its subcellular location is the cytoplasm. It functions in the pathway protein biosynthesis; polypeptide chain elongation. In terms of biological role, involved in peptide bond synthesis. Stimulates efficient translation and peptide-bond synthesis on native or reconstituted 70S ribosomes in vitro. Probably functions indirectly by altering the affinity of the ribosome for aminoacyl-tRNA, thus increasing their reactivity as acceptors for peptidyl transferase. In Chlamydia muridarum (strain MoPn / Nigg), this protein is Elongation factor P 1 (efp1).